The following is an 894-amino-acid chain: Translation initiation factor IF-2 (894 aa).

Residues 47–305 (AHLNRENGSG…GSALQQSFQK (259 aa)) are disordered. Residues 68-82 (STLNIPGTGGKSKSV) are compositionally biased toward polar residues. Composition is skewed to basic and acidic residues over residues 93-159 (VKRD…KDKV) and 166-219 (DMTK…KWTD). Residues 254-269 (GRSRNAKAARPAKKGN) are compositionally biased toward basic residues. Residues 270–283 (KHSESKADREEARA) are compositionally biased toward basic and acidic residues. The 170-residue stretch at 393–562 (PRAPVVTIMG…LLQAEVLELK (170 aa)) folds into the tr-type G domain. Positions 402–409 (GHVDHGKT) are G1. Residue 402–409 (GHVDHGKT) participates in GTP binding. The interval 427–431 (GITQH) is G2. Positions 448-451 (DTPG) are G3. Residues 448–452 (DTPGH) and 502–505 (NKID) contribute to the GTP site. The segment at 502–505 (NKID) is G4. Residues 538 to 540 (SAK) form a G5 region.

It belongs to the TRAFAC class translation factor GTPase superfamily. Classic translation factor GTPase family. IF-2 subfamily.

The protein localises to the cytoplasm. Its function is as follows. One of the essential components for the initiation of protein synthesis. Protects formylmethionyl-tRNA from spontaneous hydrolysis and promotes its binding to the 30S ribosomal subunits. Also involved in the hydrolysis of GTP during the formation of the 70S ribosomal complex. This Citrobacter koseri (strain ATCC BAA-895 / CDC 4225-83 / SGSC4696) protein is Translation initiation factor IF-2.